The chain runs to 351 residues: UDP-N-acetylenolpyruvoylglucosamine reductase (351 aa).

Residues 11–213 (GVGGSIACFI…KQVRDQVLRI (203 aa)) enclose the FAD-binding PCMH-type domain. R158 is a catalytic residue. The active-site Proton donor is S239. E343 is an active-site residue.

It belongs to the MurB family. The cofactor is FAD.

The protein localises to the cytoplasm. It carries out the reaction UDP-N-acetyl-alpha-D-muramate + NADP(+) = UDP-N-acetyl-3-O-(1-carboxyvinyl)-alpha-D-glucosamine + NADPH + H(+). It participates in cell wall biogenesis; peptidoglycan biosynthesis. Its function is as follows. Cell wall formation. In Tropheryma whipplei (strain Twist) (Whipple's bacillus), this protein is UDP-N-acetylenolpyruvoylglucosamine reductase.